We begin with the raw amino-acid sequence, 267 residues long: Small ribosomal subunit protein uS2 (267 aa).

Residues G224 to K267 form a disordered region. Positions R225–A251 are enriched in basic and acidic residues.

Belongs to the universal ribosomal protein uS2 family.

The polypeptide is Small ribosomal subunit protein uS2 (Levilactobacillus brevis (strain ATCC 367 / BCRC 12310 / CIP 105137 / JCM 1170 / LMG 11437 / NCIMB 947 / NCTC 947) (Lactobacillus brevis)).